The following is a 331-amino-acid chain: Very-long-chain 3-oxoacyl-CoA reductase (331 aa).

The helical transmembrane segment at 15–35 (VQWALAGVGALYISAKVLSYL) threads the bilayer. Residues Val-60, Asp-115, Asp-123, Asn-142, Tyr-209, Lys-213, Ile-242, and Ser-244 each contribute to the NADP(+) site. The active-site Proton donor is the Tyr-209. Lys-213 serves as the catalytic Lowers pKa of active site Tyr.

Belongs to the short-chain dehydrogenases/reductases (SDR) family.

The protein resides in the endoplasmic reticulum membrane. It catalyses the reaction a very-long-chain (3R)-3-hydroxyacyl-CoA + NADP(+) = a very-long-chain 3-oxoacyl-CoA + NADPH + H(+). It participates in lipid metabolism; fatty acid biosynthesis. In terms of biological role, component of the microsomal membrane bound fatty acid elongation system, which produces the 26-carbon very long-chain fatty acids (VLCFA) from palmitate. Catalyzes the reduction of the 3-ketoacyl-CoA intermediate that is formed in each cycle of fatty acid elongation. VLCFAs serve as precursors for ceramide and sphingolipids. The sequence is that of Very-long-chain 3-oxoacyl-CoA reductase from Pyricularia oryzae (strain 70-15 / ATCC MYA-4617 / FGSC 8958) (Rice blast fungus).